Consider the following 681-residue polypeptide: Protein hook (681 aa).

One can recognise a Calponin-homology (CH) domain in the interval 6–123 (NEMYYSLLEW…RLLQLVLGCA (118 aa)). Coiled coils occupy residues 135–439 (EIMS…LKCG) and 482–584 (QTAL…KYRK).

The protein belongs to the hook family. Homodimer. Interacts with microtubules via its N-terminus.

The protein localises to the cytoplasm. It localises to the cytoskeleton. The protein resides in the endosome. Its subcellular location is the synapse. Involved in endocytic trafficking by stabilizing organelles of the endocytic pathway. Probably acts as a cytoskeletal linker protein required to tether endosome vesicles to the cytoskeleton. Involved in modulation of endocytosis at stages required for down-regulation of membrane proteins that control synapse size. Not involved in synaptic vesicle recycling. Required in R7 cells for boss endocytosis into multivesicular bodies (MVBs). Has a role in regulating adult longevity. The polypeptide is Protein hook (Drosophila ananassae (Fruit fly)).